A 97-amino-acid polypeptide reads, in one-letter code: Co-chaperonin GroES (97 aa).

This sequence belongs to the GroES chaperonin family. In terms of assembly, heptamer of 7 subunits arranged in a ring. Interacts with the chaperonin GroEL.

It localises to the cytoplasm. In terms of biological role, together with the chaperonin GroEL, plays an essential role in assisting protein folding. The GroEL-GroES system forms a nano-cage that allows encapsulation of the non-native substrate proteins and provides a physical environment optimized to promote and accelerate protein folding. GroES binds to the apical surface of the GroEL ring, thereby capping the opening of the GroEL channel. The polypeptide is Co-chaperonin GroES (Burkholderia vietnamiensis).